Reading from the N-terminus, the 72-residue chain is Translation initiation factor IF-1 (72 aa).

Positions 1-72 (MSKEDVIELE…TRGRIVWRSK (72 aa)) constitute an S1-like domain.

This sequence belongs to the IF-1 family. In terms of assembly, component of the 30S ribosomal translation pre-initiation complex which assembles on the 30S ribosome in the order IF-2 and IF-3, IF-1 and N-formylmethionyl-tRNA(fMet); mRNA recruitment can occur at any time during PIC assembly.

It is found in the cytoplasm. Its function is as follows. One of the essential components for the initiation of protein synthesis. Stabilizes the binding of IF-2 and IF-3 on the 30S subunit to which N-formylmethionyl-tRNA(fMet) subsequently binds. Helps modulate mRNA selection, yielding the 30S pre-initiation complex (PIC). Upon addition of the 50S ribosomal subunit IF-1, IF-2 and IF-3 are released leaving the mature 70S translation initiation complex. This Caldicellulosiruptor saccharolyticus (strain ATCC 43494 / DSM 8903 / Tp8T 6331) protein is Translation initiation factor IF-1.